Reading from the N-terminus, the 307-residue chain is Transcriptional repressor scratch 2 (307 aa).

Positions 1–20 (MPRSFLVKKIKGDGFQCSGV) are SNAG domain. Disordered stretches follow at residues 34 to 90 (LPGA…PQSS) and 116 to 148 (GRSRRRRGGGGGDAGGSGDAGGAGGRAGRAGAQ). Gly residues predominate over residues 124–148 (GGGGDAGGSGDAGGAGGRAGRAGAQ). C2H2-type zinc fingers lie at residues 155-177 (HACAECGKTYATSSNLSRHKQTH), 186-208 (RKCPTCGKAYVSMPALAMHLLTH), 212-234 (HKCGVCGKAFSRPWLLQGHMRSH), and 240-262 (FGCAHCGKAFADRSNLRAHMQTH). Residues 268–291 (YRCRQCDKSFALKSYLHKHCEAAC) form a C2H2-type 5; atypical zinc finger.

This sequence belongs to the snail C2H2-type zinc-finger protein family.

It is found in the nucleus. In terms of biological role, may be involved in transcriptional regulation. In Homo sapiens (Human), this protein is Transcriptional repressor scratch 2 (SCRT2).